A 524-amino-acid polypeptide reads, in one-letter code: Alkaline phosphatase, tissue-nonspecific isozyme (524 aa).

A signal peptide spans 1–17; that stretch reads MISPFLVLAIGTCLTNS. Residue aspartate 60 coordinates Mg(2+). Zn(2+) contacts are provided by aspartate 60 and serine 110. Serine 110 (phosphoserine intermediate) is an active-site residue. Residue serine 110 is modified to Phosphoserine. The cysteines at positions 139 and 201 are disulfide-linked. N-linked (GlcNAc...) asparagine glycosylation is present at asparagine 140. Threonine 173 is a Mg(2+) binding site. Asparagine 230 is a glycosylation site (N-linked (GlcNAc...) asparagine). Glutamate 235 lines the Ca(2+) pocket. An N-linked (GlcNAc...) asparagine glycan is attached at asparagine 271. Residues phenylalanine 290 and glutamate 291 each coordinate Ca(2+). N-linked (GlcNAc...) asparagine glycosylation occurs at asparagine 303. Aspartate 306 is a Ca(2+) binding site. Residue glutamate 332 participates in Mg(2+) binding. Zn(2+) contacts are provided by aspartate 337, histidine 341, aspartate 378, and histidine 379. An N-linked (GlcNAc...) asparagine glycan is attached at asparagine 430. Histidine 454 serves as a coordination point for Zn(2+). A disulfide bridge links cysteine 489 with cysteine 497. The GPI-anchor amidated serine moiety is linked to residue serine 501. A propeptide spans 502-524 (removed in mature form); the sequence is SAGSLAAGPLLLALALYPLSVLF.

Belongs to the alkaline phosphatase family. In terms of assembly, homodimer. It depends on Mg(2+) as a cofactor. Requires Zn(2+) as cofactor. Ca(2+) is required as a cofactor. N-glycosylated.

The protein localises to the cell membrane. Its subcellular location is the extracellular vesicle membrane. The protein resides in the mitochondrion membrane. It localises to the mitochondrion intermembrane space. The catalysed reaction is a phosphate monoester + H2O = an alcohol + phosphate. It catalyses the reaction diphosphate + H2O = 2 phosphate + H(+). It carries out the reaction pyridoxal 5'-phosphate + H2O = pyridoxal + phosphate. The enzyme catalyses phosphoethanolamine + H2O = ethanolamine + phosphate. The catalysed reaction is N-phosphocreatine + H2O = creatine + phosphate. It catalyses the reaction ATP + H2O = ADP + phosphate + H(+). It carries out the reaction ADP + H2O = AMP + phosphate + H(+). The enzyme catalyses AMP + H2O = adenosine + phosphate. With respect to regulation, phosphatase activity is specifically inhibited by 5-((5-chloro-2-methoxyphenyl)sulfonamido)nicotinamide (SBI-425). Its function is as follows. Alkaline phosphatase that metabolizes various phosphate compounds and plays a key role in skeletal mineralization and adaptive thermogenesis. Has broad substrate specificity and can hydrolyze a considerable variety of compounds: however, only a few substrates, such as diphosphate (inorganic pyrophosphate; PPi), pyridoxal 5'-phosphate (PLP) and N-phosphocreatine are natural substrates. Plays an essential role in skeletal and dental mineralization via its ability to hydrolyze extracellular diphosphate, a potent mineralization inhibitor, to phosphate: it thereby promotes hydroxyapatite crystal formation and increases inorganic phosphate concentration. Acts in a non-redundant manner with PHOSPHO1 in skeletal mineralization: while PHOSPHO1 mediates the initiation of hydroxyapatite crystallization in the matrix vesicles (MVs), ALPL/TNAP catalyzes the spread of hydroxyapatite crystallization in the extracellular matrix. Also promotes dephosphorylation of osteopontin (SSP1), an inhibitor of hydroxyapatite crystallization in its phosphorylated state; it is however unclear whether ALPL/TNAP mediates SSP1 dephosphorylation via a direct or indirect manner. Catalyzes dephosphorylation of PLP to pyridoxal (PL), the transportable form of vitamin B6, in order to provide a sufficient amount of PLP in the brain, an essential cofactor for enzymes catalyzing the synthesis of diverse neurotransmitters. Additionally, also able to mediate ATP degradation in a stepwise manner to adenosine, thereby regulating the availability of ligands for purinergic receptors. Also capable of dephosphorylating microbial products, such as lipopolysaccharides (LPS) as well as other phosphorylated small-molecules, such as poly-inosine:cytosine (poly I:C). Acts as a key regulator of adaptive thermogenesis as part of the futile creatine cycle: localizes to the mitochondria of thermogenic fat cells and acts by mediating hydrolysis of N-phosphocreatine to initiate a futile cycle of creatine dephosphorylation and phosphorylation. During the futile creatine cycle, creatine and N-phosphocreatine are in a futile cycle, which dissipates the high energy charge of N-phosphocreatine as heat without performing any mechanical or chemical work. The polypeptide is Alkaline phosphatase, tissue-nonspecific isozyme (Homo sapiens (Human)).